The chain runs to 804 residues: Probable phosphoketolase (804 aa).

Belongs to the XFP family. The cofactor is thiamine diphosphate.

The protein is Probable phosphoketolase of Mycobacterium avium (strain 104).